Consider the following 223-residue polypeptide: Adenylate kinase 4, mitochondrial (223 aa).

15–20 (GSGKGT) is a binding site for a ribonucleoside 5'-triphosphate. The interval 35 to 64 (SSGHLLRENLKTGTEVGDVAKQYLEKGLLV) is NMP. AMP-binding residues include Ser36 and Arg41. The residue at position 60 (Lys60) is an N6-succinyllysine. Residues 62 to 64 (LLV), 89 to 92 (GFPR), and Gln96 each bind AMP. Positions 125-162 (RRWIHPSSGRVYNLDFNPPQVQGIDDITGEPLVQQEDD) are LID. A ribonucleoside 5'-triphosphate-binding positions include Arg126 and 135-136 (VY). Residue Arg170 participates in AMP binding. The residue at position 175 (Lys175) is an N6-acetyllysine. An N6-acetyllysine; alternate mark is found at Lys179 and Lys186. 2 positions are modified to N6-succinyllysine; alternate: Lys179 and Lys186. Thr199 is a binding site for a ribonucleoside 5'-triphosphate.

It belongs to the adenylate kinase family. AK3 subfamily. As to quaternary structure, monomer. Interacts with SLC25A5/ANT2. Expressed in kidney, liver, stomach, brain, spinal cord, heart, ovary, oviduct, colon, jejunum, ileum and testis (at protein level). In the brain, expressed in the pyramidal cells of the cerebrum and glial cells in the cerebellum (at protein level). In the heart, expressed by myocytes (at protein level). In the kidney, expressed in the proximal to distal tubule in the cortex and the outer and inner zones of the medulla (at protein level). In the stomach, expressed in stratified squamous epithelia in the forestomach and in the gastric pit and mucus producing cells of the glandular stomach (at protein level). Expressed in epithelial cells of the jejunum, ileum, and colon (at protein level). In the testis, expressed by spermatocytes (at protein level). In the ovaries, expressed by oocytes, follicular epithelial cells, and corpus luteum cells (at protein level). In the oviduct, expressed in the epithelia of the isthmus and the ciliated cells of the ampulla (at protein level). Expressed in the pyramidal cells in the hippocampus.

It is found in the mitochondrion matrix. The enzyme catalyses a ribonucleoside 5'-phosphate + ATP = a ribonucleoside 5'-diphosphate + ADP. It carries out the reaction AMP + ATP = 2 ADP. It catalyses the reaction GTP + AMP = GDP + ADP. The catalysed reaction is CMP + ATP = CDP + ADP. The enzyme catalyses GTP + CMP = CDP + GDP. It carries out the reaction dAMP + ATP = dADP + ADP. It catalyses the reaction dCMP + ATP = dCDP + ADP. The catalysed reaction is a 2'-deoxyribonucleoside 5'-diphosphate + ATP = a 2'-deoxyribonucleoside 5'-triphosphate + ADP. The enzyme catalyses a ribonucleoside 5'-diphosphate + ATP = a ribonucleoside 5'-triphosphate + ADP. It carries out the reaction GDP + ATP = GTP + ADP. It catalyses the reaction CDP + GTP = CTP + GDP. The catalysed reaction is CDP + ATP = CTP + ADP. The enzyme catalyses UDP + ATP = UTP + ADP. It carries out the reaction GTP + UDP = UTP + GDP. It catalyses the reaction dADP + GTP = dATP + GDP. The catalysed reaction is dCDP + GTP = dCTP + GDP. The enzyme catalyses dCDP + ATP = dCTP + ADP. It carries out the reaction dGDP + ATP = dGTP + ADP. It catalyses the reaction dTDP + GTP = dTTP + GDP. The catalysed reaction is dTDP + ATP = dTTP + ADP. Broad-specificity mitochondrial nucleoside phosphate kinase involved in cellular nucleotide homeostasis by catalyzing nucleoside-phosphate interconversions. Similar to other adenylate kinases, preferentially catalyzes the phosphorylation of the nucleoside monophosphate AMP with ATP as phosphate donor to produce ADP. Phosphorylates only AMP when using GTP as phosphate donor. In vitro, can also catalyze the phosphorylation of CMP, dAMP and dCMP and use GTP as an alternate phosphate donor. Moreover, exhibits a diphosphate kinase activity, producing ATP, CTP, GTP, UTP, TTP, dATP, dCTP and dGTP from the corresponding diphosphate substrates with either ATP or GTP as phosphate donors. Plays a role in controlling cellular ATP levels by regulating phosphorylation and activation of the energy sensor protein kinase AMPK. Plays a protective role in the cellular response to oxidative stress. In Mus musculus (Mouse), this protein is Adenylate kinase 4, mitochondrial.